A 444-amino-acid polypeptide reads, in one-letter code: L-ornithine N(5)-monooxygenase (444 aa).

FAD-binding positions include 40-48 (ERQPAFGWH) and Q59. K64 contributes to the substrate binding site. Residue V125 participates in FAD binding. Residues 211–214 (AGQS) and R236 each bind NADP(+). Residues 250 to 253 (NEIF) and N280 contribute to the substrate site. 280–282 (NYA) is a binding site for NADP(+). 408–410 (RCC) contacts FAD. Residues 420 to 432 (SARRSKTGSRPRT) are compositionally biased toward basic residues. The disordered stretch occupies residues 420–444 (SARRSKTGSRPRTMKAWPGPRTKND).

Belongs to the lysine N(6)-hydroxylase/L-ornithine N(5)-oxygenase family. FAD is required as a cofactor.

The catalysed reaction is L-ornithine + NADPH + O2 = N(5)-hydroxy-L-ornithine + NADP(+) + H2O. Its pathway is siderophore biosynthesis; ornibactin biosynthesis. Its function is as follows. Catalyzes the conversion of L-ornithine to N(5)-hydroxyornithine, the first step in the biosynthesis of all hydroxamate-containing siderophores, such as ornibactin. This chain is L-ornithine N(5)-monooxygenase, found in Burkholderia cepacia (Pseudomonas cepacia).